We begin with the raw amino-acid sequence, 204 residues long: Tat proofreading chaperone DmsD (204 aa).

Belongs to the TorD/DmsD family. DmsD subfamily. Monomer in solution.

In terms of biological role, required for biogenesis/assembly of DMSO reductase, but not for the interaction of the DmsA signal peptide with the Tat system. May be part of a chaperone cascade complex that facilitates a folding-maturation pathway for the substrate protein. This chain is Tat proofreading chaperone DmsD, found in Salmonella typhimurium (strain LT2 / SGSC1412 / ATCC 700720).